Here is a 379-residue protein sequence, read N- to C-terminus: Glucose-insensitive transcription protein 7 (379 aa).

The CS domain maps to 181-272; the sequence is SNRIRYDWSQ…VSEIKWEALV (92 aa). The SGS domain maps to 292–379; that stretch reads ASGNTKNKAK…PPQGMEPKKF (88 aa). Positions 345-379 are disordered; sequence SYTESNGTALSTNWKDVKSKTFETKPPQGMEPKKF. Polar residues predominate over residues 346–358; it reads YTESNGTALSTNW.

In terms of biological role, involved in cyclic AMP (cAMP) pathway, possibly by participating in the assembly or the conformational activation of specific multiprotein complexes. This chain is Glucose-insensitive transcription protein 7 (git7), found in Schizosaccharomyces pombe (strain 972 / ATCC 24843) (Fission yeast).